A 236-amino-acid chain; its full sequence is ATP-dependent dethiobiotin synthetase BioD (236 aa).

T19 is a binding site for Mg(2+). K40 is an active-site residue. Mg(2+) is bound by residues D61 and E122. ATP-binding positions include D61, 122-125 (EGVG), 182-183 (NT), and 211-213 (PRL).

The protein belongs to the dethiobiotin synthetase family. As to quaternary structure, homodimer. Requires Mg(2+) as cofactor.

Its subcellular location is the cytoplasm. The catalysed reaction is (7R,8S)-7,8-diammoniononanoate + CO2 + ATP = (4R,5S)-dethiobiotin + ADP + phosphate + 3 H(+). It participates in cofactor biosynthesis; biotin biosynthesis; biotin from 7,8-diaminononanoate: step 1/2. Catalyzes a mechanistically unusual reaction, the ATP-dependent insertion of CO2 between the N7 and N8 nitrogen atoms of 7,8-diaminopelargonic acid (DAPA, also called 7,8-diammoniononanoate) to form a ureido ring. The protein is ATP-dependent dethiobiotin synthetase BioD of Janthinobacterium sp. (strain Marseille) (Minibacterium massiliensis).